A 512-amino-acid polypeptide reads, in one-letter code: MCEEGETYCPEVKDAKQGKSLGKICMKCKESSAALLIRAGDAFCKSCFKEYFVHKFRATLGKNRVIYPGEKVLLAYSGGPSSSAMVRQVQEGLSRDAPKKLRFVPGILFIDEGTACGMSWEERQQILSEICSVLQQTKIPFHIVSLEQVFSLPGSVLQRGAPEQRPNYKEEVDRFLVQEREQGDAGCSEMLERLEVTDSDSPGSSDKMYQSTCSHPPDMHTQKLKQLFASAKTLTAKQQLLHTLRSHLILHIARTCGYSKVMTGESCTRLSIRLLSNVSLGRGAFLPLDTGFCDSRYGDVDIIRPMREYSSKEIAYYNRFFNVSPIFIPALDTKASENSSIQHLTEVFVNRLQADFPSTVSTLYRTSEKLNVSKIDADQETCAKDRCLLCLSPLDTQAGKASAFSATQLSHHLSQKIPMKSNDLANNSDKSCCQGGQGCKEAGYGDTCQSRALQTPSFVHMLCYSCRLTVKDMQSLDVLPQYVLHEAEHRCHRTEMRKEIQEFLLDEDDGDS.

It belongs to the CTU2/NCS2 family.

It localises to the cytoplasm. Its pathway is tRNA modification; 5-methoxycarbonylmethyl-2-thiouridine-tRNA biosynthesis. Functionally, plays a central role in 2-thiolation of mcm(5)S(2)U at tRNA wobble positions of tRNA(Lys), tRNA(Glu) and tRNA(Gln). May act by forming a heterodimer with ctu1/atpbd3 that ligates sulfur from thiocarboxylated urm1 onto the uridine of tRNAs at wobble position. In Xenopus laevis (African clawed frog), this protein is Cytoplasmic tRNA 2-thiolation protein 2-A (ctu2-a).